A 111-amino-acid chain; its full sequence is UPF0060 membrane protein Aave_2845 (111 aa).

4 helical membrane-spanning segments follow: residues 7-27 (FLLYAVTALAEIAGCYLPWLW), 33-53 (SAWLLVPGAACLALFAWLLTL), 63-83 (AAYGGVYVAVALGWLWAVDGI), and 90-110 (LAGAAVTLAGMAIIAFAPRGA).

It belongs to the UPF0060 family.

The protein localises to the cell inner membrane. This is UPF0060 membrane protein Aave_2845 from Paracidovorax citrulli (strain AAC00-1) (Acidovorax citrulli).